Here is a 360-residue protein sequence, read N- to C-terminus: Probable butyrate kinase (360 aa).

The protein belongs to the acetokinase family.

It is found in the cytoplasm. The enzyme catalyses butanoate + ATP = butanoyl phosphate + ADP. The sequence is that of Probable butyrate kinase from Enterococcus faecalis (strain ATCC 700802 / V583).